Here is an 844-residue protein sequence, read N- to C-terminus: Patched-related protein 9 (844 aa).

Positions 264 to 421 (LIPWMPWTSL…VTFFNAVMSL (158 aa)) constitute an SSD domain.

The protein belongs to the patched family.

The protein is Patched-related protein 9 (ptr-9) of Caenorhabditis elegans.